Here is a 375-residue protein sequence, read N- to C-terminus: MSCPVIELTQQLIRRPSLSPDDAGCQALLIERLQAIGFTVERMDFADTQNFWAWRGQGETLAFAGHTDVVPPGDADRWINPPFEPTIRDGMLFGRGAADMKGSLAAMVVAAERFVAQHPNHTGRLAFLITSDEEASAHNGTVKVVEALMSRNERLDYCLVGEPSSIEVVGDVVKNGRRGSLTCNLTIHGVQGHVAYPHLADNPVHRAAPFLNELVAIEWDQGNEFFPATSMQIANIQAGTGSNNVIPGELFVQFNFRFSTELTDEMIKAQVLALLEKHQLRYTVDWWLSGQPFLTARGKLVDAVVNAVEHYNEIKPQLLTTGGTSDGRFIARMGAQVVELGPVNATIHKINECVNAADLQLLARMYQRIMEQLVA.

Residue histidine 66 coordinates Zn(2+). Aspartate 68 is an active-site residue. Aspartate 99 provides a ligand contact to Zn(2+). Catalysis depends on glutamate 133, which acts as the Proton acceptor. Zn(2+) is bound by residues glutamate 134, glutamate 162, and histidine 348.

It belongs to the peptidase M20A family. DapE subfamily. In terms of assembly, homodimer. Zn(2+) serves as cofactor. Requires Co(2+) as cofactor.

The enzyme catalyses N-succinyl-(2S,6S)-2,6-diaminopimelate + H2O = (2S,6S)-2,6-diaminopimelate + succinate. The protein operates within amino-acid biosynthesis; L-lysine biosynthesis via DAP pathway; LL-2,6-diaminopimelate from (S)-tetrahydrodipicolinate (succinylase route): step 3/3. Its function is as follows. Catalyzes the hydrolysis of N-succinyl-L,L-diaminopimelic acid (SDAP), forming succinate and LL-2,6-diaminopimelate (DAP), an intermediate involved in the bacterial biosynthesis of lysine and meso-diaminopimelic acid, an essential component of bacterial cell walls. This Escherichia coli (strain SE11) protein is Succinyl-diaminopimelate desuccinylase.